Reading from the N-terminus, the 108-residue chain is Succinate dehydrogenase assembly factor 4, mitochondrial (108 aa).

The N-terminal 20 residues, 1–20 (MTPSRLPWLLSWVSATAWRA), are a transit peptide targeting the mitochondrion. A disordered region spans residues 31–108 (RKTSSSQGGK…WERKGRCIDF (78 aa)). Basic and acidic residues-rich tracts occupy residues 52–87 (KLPE…EKGG) and 95–108 (RYGD…CIDF).

Belongs to the SDHAF4 family. As to quaternary structure, interacts with SDHA in its FAD-bound form.

It is found in the mitochondrion matrix. Its function is as follows. Plays an essential role in the assembly of succinate dehydrogenase (SDH), an enzyme complex (also referred to as respiratory complex II) that is a component of both the tricarboxylic acid (TCA) cycle and the mitochondrial electron transport chain, and which couples the oxidation of succinate to fumarate with the reduction of ubiquinone (coenzyme Q) to ubiquinol. Binds to the flavoprotein subunit SDHA in its FAD-bound form, blocking the generation of excess reactive oxygen species (ROS) and facilitating its assembly with the iron-sulfur protein subunit SDHB into the SDH catalytic dimer. This is Succinate dehydrogenase assembly factor 4, mitochondrial from Homo sapiens (Human).